The sequence spans 346 residues: Phosphoribosylformylglycinamidine cyclo-ligase (346 aa).

It belongs to the AIR synthase family.

The protein resides in the cytoplasm. The enzyme catalyses 2-formamido-N(1)-(5-O-phospho-beta-D-ribosyl)acetamidine + ATP = 5-amino-1-(5-phospho-beta-D-ribosyl)imidazole + ADP + phosphate + H(+). It participates in purine metabolism; IMP biosynthesis via de novo pathway; 5-amino-1-(5-phospho-D-ribosyl)imidazole from N(2)-formyl-N(1)-(5-phospho-D-ribosyl)glycinamide: step 2/2. This is Phosphoribosylformylglycinamidine cyclo-ligase from Brevibacillus brevis (strain 47 / JCM 6285 / NBRC 100599).